The sequence spans 463 residues: 4-hydroxybenzoate polyprenyltransferase, mitochondrial (463 aa).

Disordered stretches follow at residues 28 to 48 (NNNTNNNNNNNGINKYNSTFN) and 133 to 152 (LLDDNNSNSNNNNNSNNNKP). Residues 137-150 (NNSNSNNNNNSNNN) show a composition bias toward low complexity. The next 7 helical transmembrane spans lie at 181 to 201 (IGVWLLLYPCCWSISLAAPAG), 206 to 226 (LKTMLVFGIGAYVMRSAGCVI), 257 to 277 (LIFLGGQLLASFGLILSSLNY), 305 to 325 (FVLGLAFNWGALAGYSAIAGS), 330 to 350 (IVAPLYLAGISWTMVYDTIYA), 375 to 395 (IILSVFSGLVISGMFLTGIAA), and 431 to 451 (FISNKNFGLYFLLIIIVSKLL).

This sequence belongs to the UbiA prenyltransferase family. Mg(2+) serves as cofactor.

It is found in the mitochondrion inner membrane. The catalysed reaction is an all-trans-polyprenyl diphosphate + 4-hydroxybenzoate = a 4-hydroxy-3-(all-trans-polyprenyl)benzoate + diphosphate. It participates in cofactor biosynthesis; ubiquinone biosynthesis. Catalyzes the prenylation of para-hydroxybenzoate (PHB) with an all-trans polyprenyl group. Mediates the second step in the final reaction sequence of coenzyme Q (CoQ) biosynthesis, which is the condensation of the polyisoprenoid side chain with PHB. Its function is as follows. Catalyzes the prenylation of para-hydroxybenzoate (PHB) with an all-trans polyprenyl group. Mediates the second step in the final reaction sequence of coenzyme Q (CoQ) biosynthesis, which is the condensation of the polyisoprenoid side chain with PHB, generating the first membrane-bound Q intermediate. This Dictyostelium discoideum (Social amoeba) protein is 4-hydroxybenzoate polyprenyltransferase, mitochondrial.